We begin with the raw amino-acid sequence, 194 residues long: Imidazoleglycerol-phosphate dehydratase (194 aa).

Belongs to the imidazoleglycerol-phosphate dehydratase family.

The protein resides in the cytoplasm. The catalysed reaction is D-erythro-1-(imidazol-4-yl)glycerol 3-phosphate = 3-(imidazol-4-yl)-2-oxopropyl phosphate + H2O. The protein operates within amino-acid biosynthesis; L-histidine biosynthesis; L-histidine from 5-phospho-alpha-D-ribose 1-diphosphate: step 6/9. This Caldanaerobacter subterraneus subsp. tengcongensis (strain DSM 15242 / JCM 11007 / NBRC 100824 / MB4) (Thermoanaerobacter tengcongensis) protein is Imidazoleglycerol-phosphate dehydratase.